The following is a 426-amino-acid chain: Serine hydroxymethyltransferase (426 aa).

Residues leucine 111 and 115 to 117 each bind (6S)-5,6,7,8-tetrahydrofolate; that span reads GHL. Lysine 220 carries the N6-(pyridoxal phosphate)lysine modification.

This sequence belongs to the SHMT family. Homodimer. Pyridoxal 5'-phosphate is required as a cofactor.

Its subcellular location is the cytoplasm. It catalyses the reaction (6R)-5,10-methylene-5,6,7,8-tetrahydrofolate + glycine + H2O = (6S)-5,6,7,8-tetrahydrofolate + L-serine. It functions in the pathway one-carbon metabolism; tetrahydrofolate interconversion. The protein operates within amino-acid biosynthesis; glycine biosynthesis; glycine from L-serine: step 1/1. Its function is as follows. Catalyzes the reversible interconversion of serine and glycine with tetrahydrofolate (THF) serving as the one-carbon carrier. This reaction serves as the major source of one-carbon groups required for the biosynthesis of purines, thymidylate, methionine, and other important biomolecules. Also exhibits THF-independent aldolase activity toward beta-hydroxyamino acids, producing glycine and aldehydes, via a retro-aldol mechanism. In Orientia tsutsugamushi (strain Ikeda) (Rickettsia tsutsugamushi), this protein is Serine hydroxymethyltransferase.